We begin with the raw amino-acid sequence, 139 residues long: ATP synthase epsilon chain (139 aa).

The protein belongs to the ATPase epsilon chain family. F-type ATPases have 2 components, CF(1) - the catalytic core - and CF(0) - the membrane proton channel. CF(1) has five subunits: alpha(3), beta(3), gamma(1), delta(1), epsilon(1). CF(0) has three main subunits: a, b and c.

Its subcellular location is the cell inner membrane. In terms of biological role, produces ATP from ADP in the presence of a proton gradient across the membrane. The sequence is that of ATP synthase epsilon chain from Acinetobacter baumannii (strain AB307-0294).